Consider the following 353-residue polypeptide: MAMTLLEDWCRGMDVNSQRALLVWGIPVNCDETEIEETLQAAMPQVSYRVLGRMFWREENAKAALLELTGAVDYSLIPREMPGKGGLWKVVFKPPTSDAVFLERLHLFLAREGWTVQDVARVLGFQNPAPAPGPEMPAEMLNYILDNVIQPLVESIWYKKLTLFSGKDIPGPGEETFDSWLEHSNEIIEEWQVSDIEKRRRLMESLRGPAADVIRILKTNNAAITTAECLKALEQVFGSVESSRDAQVRFLNTYQNPGEKLSSYVIRLEPLLQKVVDKGVIDKDNVNQARLEQVIAGANHSGALRRQLWLAGAEEGPAPNLFQLLVQIREEEAKKEEEEAEAALLQLGLEGHF.

The protein belongs to the PNMA family. In terms of tissue distribution, predominantly expressed in testis. Very low levels in the brain, including in the piriform cortex, hippocampus and some subcortical nuclei.

The protein resides in the nucleus. It localises to the nucleolus. This chain is Paraneoplastic antigen Ma1 homolog (Pnma1), found in Mus musculus (Mouse).